The primary structure comprises 262 residues: 3-deoxy-manno-octulosonate cytidylyltransferase (262 aa).

It belongs to the KdsB family.

It is found in the cytoplasm. It carries out the reaction 3-deoxy-alpha-D-manno-oct-2-ulosonate + CTP = CMP-3-deoxy-beta-D-manno-octulosonate + diphosphate. It functions in the pathway nucleotide-sugar biosynthesis; CMP-3-deoxy-D-manno-octulosonate biosynthesis; CMP-3-deoxy-D-manno-octulosonate from 3-deoxy-D-manno-octulosonate and CTP: step 1/1. It participates in bacterial outer membrane biogenesis; lipopolysaccharide biosynthesis. Activates KDO (a required 8-carbon sugar) for incorporation into bacterial lipopolysaccharide in Gram-negative bacteria. In Blochmanniella pennsylvanica (strain BPEN), this protein is 3-deoxy-manno-octulosonate cytidylyltransferase.